We begin with the raw amino-acid sequence, 106 residues long: Large ribosomal subunit protein uL23 (106 aa).

The protein belongs to the universal ribosomal protein uL23 family. As to quaternary structure, part of the 50S ribosomal subunit. Contacts protein L29, and trigger factor when it is bound to the ribosome.

In terms of biological role, one of the early assembly proteins it binds 23S rRNA. One of the proteins that surrounds the polypeptide exit tunnel on the outside of the ribosome. Forms the main docking site for trigger factor binding to the ribosome. This chain is Large ribosomal subunit protein uL23, found in Acinetobacter baumannii (strain SDF).